Here is a 149-residue protein sequence, read N- to C-terminus: Large ribosomal subunit protein eL19 (149 aa).

A disordered region spans residues 46-99; it reads EDGTIEAKTAKGNSRGRARKRQQKRAYGHKKGHGSRKGRSGGRQNEKEDWQSRI. Residues 59-85 show a composition bias toward basic residues; it reads SRGRARKRQQKRAYGHKKGHGSRKGRS. The span at 89-99 shows a compositional bias: basic and acidic residues; that stretch reads QNEKEDWQSRI.

It belongs to the eukaryotic ribosomal protein eL19 family. Part of the 50S ribosomal subunit.

Its function is as follows. Binds to the 23S rRNA. The protein is Large ribosomal subunit protein eL19 of Natronomonas pharaonis (strain ATCC 35678 / DSM 2160 / CIP 103997 / JCM 8858 / NBRC 14720 / NCIMB 2260 / Gabara) (Halobacterium pharaonis).